Here is a 294-residue protein sequence, read N- to C-terminus: 4-hydroxy-tetrahydrodipicolinate synthase (294 aa).

Thr47 serves as a coordination point for pyruvate. The Proton donor/acceptor role is filled by Tyr135. Lys163 functions as the Schiff-base intermediate with substrate in the catalytic mechanism. Residue Val205 participates in pyruvate binding.

Belongs to the DapA family. In terms of assembly, homotetramer; dimer of dimers.

It is found in the cytoplasm. It carries out the reaction L-aspartate 4-semialdehyde + pyruvate = (2S,4S)-4-hydroxy-2,3,4,5-tetrahydrodipicolinate + H2O + H(+). It participates in amino-acid biosynthesis; L-lysine biosynthesis via DAP pathway; (S)-tetrahydrodipicolinate from L-aspartate: step 3/4. Catalyzes the condensation of (S)-aspartate-beta-semialdehyde [(S)-ASA] and pyruvate to 4-hydroxy-tetrahydrodipicolinate (HTPA). In Rickettsia bellii (strain RML369-C), this protein is 4-hydroxy-tetrahydrodipicolinate synthase.